Here is a 1023-residue protein sequence, read N- to C-terminus: Exportin-T (1023 aa).

It belongs to the exportin family.

The protein localises to the nucleus. Its subcellular location is the cytoplasm. Functionally, tRNA nucleus export receptor which facilitates tRNA translocation across the nuclear pore complex. Involved in pre-tRNA splicing, probably by affecting the interaction of pre-tRNA with splicing endonuclease. The chain is Exportin-T (los1) from Sclerotinia sclerotiorum (strain ATCC 18683 / 1980 / Ss-1) (White mold).